The chain runs to 146 residues: Hemoglobin subunit beta (146 aa).

An N-acetylvaline modification is found at V1. The region spanning H2 to H146 is the Globin domain. Phosphothreonine is present on T12. N6-acetyllysine is present on K59. Heme b is bound at residue H63. K82 carries the N6-acetyllysine modification. Residue H92 coordinates heme b. C93 carries the post-translational modification S-nitrosocysteine. Residue K144 is modified to N6-acetyllysine.

Belongs to the globin family. As to quaternary structure, heterotetramer of two alpha chains and two beta chains. As to expression, red blood cells.

In terms of biological role, involved in oxygen transport from the lung to the various peripheral tissues. In Potorous tridactylus (Potoroo), this protein is Hemoglobin subunit beta (HBB).